The chain runs to 600 residues: FERM domain-containing protein 3 (600 aa).

One can recognise an FERM domain in the interval Met-31–Lys-311. The disordered stretch occupies residues Ser-413 to Arg-440. The helical transmembrane segment at Leu-534 to Glu-554 threads the bilayer.

It is found in the membrane. In Xenopus tropicalis (Western clawed frog), this protein is FERM domain-containing protein 3 (frmd3).